The primary structure comprises 78 residues: Probable [Fe-S]-dependent transcriptional repressor (78 aa).

Iron-sulfur cluster contacts are provided by Cys56, Cys61, Cys64, and Cys70.

The protein belongs to the FeoC family.

Functionally, may function as a transcriptional regulator that controls feoABC expression. The sequence is that of Probable [Fe-S]-dependent transcriptional repressor from Escherichia fergusonii (strain ATCC 35469 / DSM 13698 / CCUG 18766 / IAM 14443 / JCM 21226 / LMG 7866 / NBRC 102419 / NCTC 12128 / CDC 0568-73).